Reading from the N-terminus, the 430-residue chain is Serine carboxypeptidase-like 13 (430 aa).

Positions 1–22 (MSLTLEFLLLLIVLILSHHAHS) are cleaved as a signal peptide. Intrachain disulfides connect C81–C319, C240–C254, and C278–C285. An N-linked (GlcNAc...) asparagine glycan is attached at N102. Residue S177 is part of the active site. N-linked (GlcNAc...) asparagine glycans are attached at residues N299 and N323. D355 is an active-site residue. N371 is a glycosylation site (N-linked (GlcNAc...) asparagine). H408 is an active-site residue.

It belongs to the peptidase S10 family. In terms of tissue distribution, expression not detected.

The protein resides in the secreted. The catalysed reaction is 2 1-O-(trans-sinapoyl)-beta-D-glucose = 1,2-di-O-sinapoyl beta-D-glucose + D-glucose. Its function is as follows. Catalyzes the formation of 1,2-bis-O-sinapoyl beta-D-glucoside. The sequence is that of Serine carboxypeptidase-like 13 (SCPL13) from Arabidopsis thaliana (Mouse-ear cress).